The primary structure comprises 201 residues: MVKEAGTKNRREKTKRIIIGISGASGTIYGIRTVQFLNELGYEIHIIISKSAEKVAQKELGINLINELKKYSSYIYNQSQIEASPSSSSFSITSKGMIIIPCSIKTLAEIANGIGSNLLSRTALNFIRTNKRLVLVIRETPLGAIELENALKLARLGVYIMPASPAFYILPKNIDDMINFIVGKALDLLGIKHDIYKRWKG.

FMN contacts are provided by residues 23-25 (GAS), Ser49, 103-106 (SIKT), and Arg138. 2 residues coordinate dimethylallyl phosphate: Tyr168 and Lys184.

It belongs to the UbiX/PAD1 family.

The enzyme catalyses dimethylallyl phosphate + FMNH2 = prenylated FMNH2 + phosphate. Its function is as follows. Flavin prenyltransferase that catalyzes the synthesis of the prenylated FMN cofactor (prenyl-FMN) for 4-hydroxy-3-polyprenylbenzoic acid decarboxylase UbiD. The prenyltransferase is metal-independent and links a dimethylallyl moiety from dimethylallyl monophosphate (DMAP) to the flavin N5 and C6 atoms of FMN. The polypeptide is Flavin prenyltransferase UbiX (Saccharolobus solfataricus (strain ATCC 35092 / DSM 1617 / JCM 11322 / P2) (Sulfolobus solfataricus)).